Here is a 434-residue protein sequence, read N- to C-terminus: Zinc finger protein Pegasus (434 aa).

A disordered region spans residues 33–57 (VSSDKEAETLQGAGTDSDQNGLDHP). 3 consecutive C2H2-type zinc fingers follow at residues 82–104 (LKCR…IRIH), 110–132 (HRCH…MRSH), and 138–161 (YKCE…RRKH). The span at 260–274 (GQLSSLPPDTQNPAS) shows a compositional bias: polar residues. Residues 260 to 357 (GQLSSLPPDT…PSTPAPALPA (98 aa)) are disordered. The span at 296-313 (CASAVSTSVAQSSSPASP) shows a compositional bias: low complexity. Over residues 337–349 (RTSTPSISNSQPS) the composition is skewed to polar residues. C2H2-type zinc fingers lie at residues 364-386 (HHCQ…MGCH) and 392-419 (FQCN…CCQH).

Belongs to the Ikaros C2H2-type zinc-finger protein family. In terms of assembly, probably self-associates.

The protein localises to the nucleus. Functionally, transcriptional repressor that binds the core 5'GNNTGTNG-3' DNA consensus sequence. The protein is Zinc finger protein Pegasus (ikzf5) of Xenopus tropicalis (Western clawed frog).